The sequence spans 62 residues: Large ribosomal subunit protein bL28 (62 aa).

Belongs to the bacterial ribosomal protein bL28 family.

The chain is Large ribosomal subunit protein bL28 from Moorella thermoacetica (strain ATCC 39073 / JCM 9320).